We begin with the raw amino-acid sequence, 519 residues long: Steroid 17-alpha-hydroxylase/17,20 lyase (519 aa).

Cysteine 455 serves as a coordination point for heme.

It belongs to the cytochrome P450 family. Heme is required as a cofactor.

It localises to the membrane. The enzyme catalyses a C21-steroid + reduced [NADPH--hemoprotein reductase] + O2 = a 17alpha-hydroxy-C21-steroid + oxidized [NADPH--hemoprotein reductase] + H2O + H(+). It catalyses the reaction 17alpha-hydroxyprogesterone + reduced [NADPH--hemoprotein reductase] + O2 = androst-4-ene-3,17-dione + acetate + oxidized [NADPH--hemoprotein reductase] + H2O + 2 H(+). The catalysed reaction is 17alpha-hydroxypregnenolone + reduced [NADPH--hemoprotein reductase] + O2 = 3beta-hydroxyandrost-5-en-17-one + acetate + oxidized [NADPH--hemoprotein reductase] + H2O + 2 H(+). The protein operates within lipid metabolism; steroid biosynthesis. In terms of biological role, conversion of pregnenolone and progesterone to their 17-alpha-hydroxylated products and subsequently to dehydroepiandrosterone (DHEA) and androstenedione. Catalyzes both the 17-alpha-hydroxylation and the 17,20-lyase reaction. This Rana dybowskii (Dybovsky's frog) protein is Steroid 17-alpha-hydroxylase/17,20 lyase (CYP17A1).